Here is a 581-residue protein sequence, read N- to C-terminus: Proline--tRNA ligase (581 aa).

This sequence belongs to the class-II aminoacyl-tRNA synthetase family. ProS type 1 subfamily. Homodimer.

It is found in the cytoplasm. The catalysed reaction is tRNA(Pro) + L-proline + ATP = L-prolyl-tRNA(Pro) + AMP + diphosphate. Catalyzes the attachment of proline to tRNA(Pro) in a two-step reaction: proline is first activated by ATP to form Pro-AMP and then transferred to the acceptor end of tRNA(Pro). As ProRS can inadvertently accommodate and process non-cognate amino acids such as alanine and cysteine, to avoid such errors it has two additional distinct editing activities against alanine. One activity is designated as 'pretransfer' editing and involves the tRNA(Pro)-independent hydrolysis of activated Ala-AMP. The other activity is designated 'posttransfer' editing and involves deacylation of mischarged Ala-tRNA(Pro). The misacylated Cys-tRNA(Pro) is not edited by ProRS. The protein is Proline--tRNA ligase of Verminephrobacter eiseniae (strain EF01-2).